We begin with the raw amino-acid sequence, 210 residues long: Histidine biosynthesis bifunctional protein HisIE (210 aa).

A phosphoribosyl-AMP cyclohydrolase region spans residues 1–106 (MTKYKIDFSK…SCFNTEVPFS (106 aa)). The tract at residues 107 to 210 (VQTLAQTVQD…KGERQNIEQW (104 aa)) is phosphoribosyl-ATP pyrophosphohydrolase.

This sequence in the N-terminal section; belongs to the PRA-CH family. The protein in the C-terminal section; belongs to the PRA-PH family.

It localises to the cytoplasm. It carries out the reaction 1-(5-phospho-beta-D-ribosyl)-ATP + H2O = 1-(5-phospho-beta-D-ribosyl)-5'-AMP + diphosphate + H(+). The enzyme catalyses 1-(5-phospho-beta-D-ribosyl)-5'-AMP + H2O = 1-(5-phospho-beta-D-ribosyl)-5-[(5-phospho-beta-D-ribosylamino)methylideneamino]imidazole-4-carboxamide. It participates in amino-acid biosynthesis; L-histidine biosynthesis; L-histidine from 5-phospho-alpha-D-ribose 1-diphosphate: step 2/9. It functions in the pathway amino-acid biosynthesis; L-histidine biosynthesis; L-histidine from 5-phospho-alpha-D-ribose 1-diphosphate: step 3/9. In Staphylococcus aureus (strain Mu50 / ATCC 700699), this protein is Histidine biosynthesis bifunctional protein HisIE (hisI).